Here is a 301-residue protein sequence, read N- to C-terminus: Methionyl-tRNA formyltransferase (301 aa).

Residue Ser-110–Pro-113 coordinates (6S)-5,6,7,8-tetrahydrofolate.

This sequence belongs to the Fmt family.

The enzyme catalyses L-methionyl-tRNA(fMet) + (6R)-10-formyltetrahydrofolate = N-formyl-L-methionyl-tRNA(fMet) + (6S)-5,6,7,8-tetrahydrofolate + H(+). In terms of biological role, attaches a formyl group to the free amino group of methionyl-tRNA(fMet). The formyl group appears to play a dual role in the initiator identity of N-formylmethionyl-tRNA by promoting its recognition by IF2 and preventing the misappropriation of this tRNA by the elongation apparatus. The chain is Methionyl-tRNA formyltransferase from Anaplasma phagocytophilum (strain HZ).